The chain runs to 363 residues: Phosphoserine aminotransferase (363 aa).

Residue Arg42 participates in L-glutamate binding. Pyridoxal 5'-phosphate contacts are provided by residues 76 to 77 (GR), Trp102, Thr156, Asp175, and Gln198. Lys199 carries the N6-(pyridoxal phosphate)lysine modification. 240–241 (NT) is a pyridoxal 5'-phosphate binding site.

It belongs to the class-V pyridoxal-phosphate-dependent aminotransferase family. SerC subfamily. As to quaternary structure, homodimer. Requires pyridoxal 5'-phosphate as cofactor.

It localises to the cytoplasm. It carries out the reaction O-phospho-L-serine + 2-oxoglutarate = 3-phosphooxypyruvate + L-glutamate. The enzyme catalyses 4-(phosphooxy)-L-threonine + 2-oxoglutarate = (R)-3-hydroxy-2-oxo-4-phosphooxybutanoate + L-glutamate. The protein operates within amino-acid biosynthesis; L-serine biosynthesis; L-serine from 3-phospho-D-glycerate: step 2/3. It participates in cofactor biosynthesis; pyridoxine 5'-phosphate biosynthesis; pyridoxine 5'-phosphate from D-erythrose 4-phosphate: step 3/5. In terms of biological role, catalyzes the reversible conversion of 3-phosphohydroxypyruvate to phosphoserine and of 3-hydroxy-2-oxo-4-phosphonooxybutanoate to phosphohydroxythreonine. The sequence is that of Phosphoserine aminotransferase from Shewanella sp. (strain MR-7).